The primary structure comprises 385 residues: Leucine aminopeptidase 1 (385 aa).

Positions 1 to 20 are cleaved as a signal peptide; that stretch reads MKFPSLLSLGVAASTTIVAA. A propeptide spanning residues 21–87 is cleaved from the precursor; sequence VPDQKPIGDI…FPKTFAQTTV (67 aa). N-linked (GlcNAc...) asparagine glycosylation occurs at asparagine 177. Residues histidine 185, aspartate 204, glutamate 243, and aspartate 270 each coordinate Zn(2+). Cysteine 319 and cysteine 323 are disulfide-bonded. A Zn(2+)-binding site is contributed by histidine 352.

The protein belongs to the peptidase M28 family. M28E subfamily. Monomer. Zn(2+) serves as cofactor.

It is found in the secreted. Its function is as follows. Extracellular aminopeptidase that allows assimilation of proteinaceous substrates. This Ajellomyces capsulatus (strain G186AR / H82 / ATCC MYA-2454 / RMSCC 2432) (Darling's disease fungus) protein is Leucine aminopeptidase 1 (LAP1).